Reading from the N-terminus, the 392-residue chain is Dual-specificity RNA methyltransferase RlmN (392 aa).

The active-site Proton acceptor is the Glu116. A Radical SAM core domain is found at 122 to 364 (EEGRGTLCVS…SPIRTPRGED (243 aa)). Cys129 and Cys369 are disulfide-bonded. [4Fe-4S] cluster-binding residues include Cys136, Cys140, and Cys143. S-adenosyl-L-methionine contacts are provided by residues 195 to 196 (GE), Ser227, 249 to 251 (SFH), and Asn326. Cys369 serves as the catalytic S-methylcysteine intermediate.

Belongs to the radical SAM superfamily. RlmN family. It depends on [4Fe-4S] cluster as a cofactor.

The protein resides in the cytoplasm. The enzyme catalyses adenosine(2503) in 23S rRNA + 2 reduced [2Fe-2S]-[ferredoxin] + 2 S-adenosyl-L-methionine = 2-methyladenosine(2503) in 23S rRNA + 5'-deoxyadenosine + L-methionine + 2 oxidized [2Fe-2S]-[ferredoxin] + S-adenosyl-L-homocysteine. It carries out the reaction adenosine(37) in tRNA + 2 reduced [2Fe-2S]-[ferredoxin] + 2 S-adenosyl-L-methionine = 2-methyladenosine(37) in tRNA + 5'-deoxyadenosine + L-methionine + 2 oxidized [2Fe-2S]-[ferredoxin] + S-adenosyl-L-homocysteine. Specifically methylates position 2 of adenine 2503 in 23S rRNA and position 2 of adenine 37 in tRNAs. m2A2503 modification seems to play a crucial role in the proofreading step occurring at the peptidyl transferase center and thus would serve to optimize ribosomal fidelity. This is Dual-specificity RNA methyltransferase RlmN from Cereibacter sphaeroides (strain ATCC 17029 / ATH 2.4.9) (Rhodobacter sphaeroides).